Reading from the N-terminus, the 214-residue chain is Probable transaldolase (214 aa).

Catalysis depends on lysine 83, which acts as the Schiff-base intermediate with substrate.

The protein belongs to the transaldolase family. Type 3B subfamily.

The protein resides in the cytoplasm. It catalyses the reaction D-sedoheptulose 7-phosphate + D-glyceraldehyde 3-phosphate = D-erythrose 4-phosphate + beta-D-fructose 6-phosphate. The protein operates within carbohydrate degradation; pentose phosphate pathway; D-glyceraldehyde 3-phosphate and beta-D-fructose 6-phosphate from D-ribose 5-phosphate and D-xylulose 5-phosphate (non-oxidative stage): step 2/3. Functionally, transaldolase is important for the balance of metabolites in the pentose-phosphate pathway. The polypeptide is Probable transaldolase (Citrifermentans bemidjiense (strain ATCC BAA-1014 / DSM 16622 / JCM 12645 / Bem) (Geobacter bemidjiensis)).